Here is a 246-residue protein sequence, read N- to C-terminus: Bis(5'-nucleosyl)-tetraphosphatase PrpE [asymmetrical] (246 aa).

Belongs to the PrpE family. It depends on Ni(2+) as a cofactor.

The catalysed reaction is P(1),P(4)-bis(5'-guanosyl) tetraphosphate + H2O = GMP + GTP + 2 H(+). Functionally, asymmetrically hydrolyzes Ap4p to yield AMP and ATP. The chain is Bis(5'-nucleosyl)-tetraphosphatase PrpE [asymmetrical] from Bacillus anthracis (strain A0248).